Consider the following 257-residue polypeptide: 5'-nucleotidase SurE (257 aa).

Residues Asp9, Asp10, Ser42, and Asn96 each coordinate a divalent metal cation.

The protein belongs to the SurE nucleotidase family. A divalent metal cation serves as cofactor.

Its subcellular location is the cytoplasm. It carries out the reaction a ribonucleoside 5'-phosphate + H2O = a ribonucleoside + phosphate. In terms of biological role, nucleotidase that shows phosphatase activity on nucleoside 5'-monophosphates. In Campylobacter lari (strain RM2100 / D67 / ATCC BAA-1060), this protein is 5'-nucleotidase SurE.